A 299-amino-acid chain; its full sequence is Lymphocyte antigen 6 complex locus protein G6f (299 aa).

Residues 1 to 19 form the signal peptide; it reads MAVLFLLLLFLCGLPQAET. The Ig-like V-type domain occupies 20–124; sequence DSIQAIYVVL…YRYQNWRVYD (105 aa). Topologically, residues 20 to 237 are extracellular; that stretch reads DSIQAIYVVL…APSADWDVAW (218 aa). The cysteines at positions 37 and 108 are disulfide-linked. Asparagine 90 carries an N-linked (GlcNAc...) asparagine glycan. The chain crosses the membrane as a helical span at residues 238–258; sequence ILTLLLTVGQGFTIVVLGVML. Residues 259–299 lie on the Cytoplasmic side of the membrane; the sequence is WRQRAQGAQHRNASFPQFKPEIQVYENIHLAHLSPPAPKTR. Position 283 is a phosphotyrosine (tyrosine 283).

Homodimer; disulfide-linked. Interacts with GRB2 and GRB7 in a phosphorylation-dependent manner. Post-translationally, N-glycosylated.

It is found in the cell membrane. Functionally, may play a role in the downstream signal transduction pathways involving GRB2 and GRB7. The sequence is that of Lymphocyte antigen 6 complex locus protein G6f (LY6G6F) from Bos taurus (Bovine).